Here is a 25-residue protein sequence, read N- to C-terminus: Small ribosomal subunit protein uS19 (25 aa).

Residues 1 to 25 (GHKLGEFAPTRTFRGHKKEDKKVKR) are disordered.

Belongs to the universal ribosomal protein uS19 family.

Protein S19 forms a complex with S13 that binds strongly to the 16S ribosomal RNA. In Acholeplasma laidlawii, this protein is Small ribosomal subunit protein uS19 (rpsS).